The primary structure comprises 313 residues: Olfactory receptor 10Z1 (313 aa).

Over 1–25 (MGQTNVTSWRDFVFLGFSSSGELQL) the chain is Extracellular. Residue N5 is glycosylated (N-linked (GlcNAc...) asparagine). The chain crosses the membrane as a helical span at residues 26 to 46 (LLFALFLSLYLVTLTSNVFII). Topologically, residues 47-54 (IAIRLDSH) are cytoplasmic. The chain crosses the membrane as a helical span at residues 55–75 (LHTPMYLFLSFLSFSETCYTL). Residues 76-99 (GIIPRMLSGLAGGDQAISYVGCAA) lie on the Extracellular side of the membrane. A disulfide bridge links C97 with C189. Residues 100-120 (QMFFSASWACTNCFLLAAMGF) traverse the membrane as a helical segment. Residues 121–139 (DRYVAICAPLHYASHMNPT) lie on the Cytoplasmic side of the membrane. A helical membrane pass occupies residues 140–160 (LCAQLVITSFLTGYLFGLGMT). At 161–197 (LVIFHLSFCSSHEIQHFFCDTPPVLSLACGDTGPSEL) the chain is on the extracellular side. Residues 198-217 (RIFILSLLVLLVSFFFITIS) form a helical membrane-spanning segment. Residues 218 to 237 (YAYILAAILRIPSAEGQKKA) lie on the Cytoplasmic side of the membrane. A helical membrane pass occupies residues 238–258 (FSTCASHLTVVIIHYGCASFV). Over 259–271 (YLRPKASYSLERD) the chain is Extracellular. Residues 272 to 292 (QLIAMTYTVVTPLLNPIVYSL) form a helical membrane-spanning segment. The Cytoplasmic segment spans residues 293-313 (RNRAIQTALRNAFRGRLLGKG).

The protein belongs to the G-protein coupled receptor 1 family.

It is found in the cell membrane. Functionally, odorant receptor. In Homo sapiens (Human), this protein is Olfactory receptor 10Z1 (OR10Z1).